We begin with the raw amino-acid sequence, 146 residues long: DNA-binding protein Rv2175c (146 aa).

The segment at 1–27 is disordered; sequence MPGRAPGSTLARVGSIPAGDDVLDPDE. Phosphothreonine is present on T9.

As to quaternary structure, monomer in solution. May form homodimers. Interacts with phosphorylated PknL. Phosphorylated by PknL. Phosphorylation negatively regulates DNA-binding activity.

Binds DNA at low salt concentrations. The polypeptide is DNA-binding protein Rv2175c (Mycobacterium tuberculosis (strain ATCC 25618 / H37Rv)).